The chain runs to 68 residues: Cytotoxic linear peptide (68 aa).

The first 23 residues, 1 to 23, serve as a signal peptide directing secretion; the sequence is MKTQFAILLIALVLFQMFSQSEA. Residue L36 is modified to Leucine amide. A propeptide spanning residues 40–68 is cleaved from the precursor; sequence GLNELDDLDELFDGEISQADIDFLKELMS.

The protein belongs to the non-disulfide-bridged peptide (NDBP) superfamily. Short antimicrobial peptide (group 4) family. Expressed by the venom gland.

Its subcellular location is the secreted. It localises to the target cell membrane. Its function is as follows. Amphipathic peptide that has antibacterial activities. The protein is Cytotoxic linear peptide of Pandinus cavimanus (Tanzanian red clawed scorpion).